A 142-amino-acid chain; its full sequence is Hemoglobin subunit alpha (142 aa).

In terms of domain architecture, Globin spans 2-142; sequence VLSPADKTNV…VSTVLTSKYR (141 aa). The residue at position 4 (Ser-4) is a Phosphoserine. Residue Lys-8 is modified to N6-succinyllysine. Position 9 is a phosphothreonine (Thr-9). At Lys-12 the chain carries N6-succinyllysine. Lys-17 is subject to N6-acetyllysine; alternate. The residue at position 17 (Lys-17) is an N6-succinyllysine; alternate. Phosphotyrosine is present on Tyr-25. Position 36 is a phosphoserine (Ser-36). Lys-41 carries the post-translational modification N6-succinyllysine. A Phosphoserine modification is found at Ser-50. His-59 lines the O2 pocket. His-88 is a heme b binding site. Phosphoserine is present on Ser-103. Thr-109 bears the Phosphothreonine mark. At Ser-125 the chain carries Phosphoserine. Residues Thr-135 and Thr-138 each carry the phosphothreonine modification. Ser-139 is modified (phosphoserine).

Belongs to the globin family. As to quaternary structure, heterotetramer of two alpha chains and two beta chains. As to expression, red blood cells.

Functionally, involved in oxygen transport from the lung to the various peripheral tissues. Its function is as follows. Hemopressin acts as an antagonist peptide of the cannabinoid receptor CNR1. Hemopressin-binding efficiently blocks cannabinoid receptor CNR1 and subsequent signaling. This Ailuropoda melanoleuca (Giant panda) protein is Hemoglobin subunit alpha (HBA).